The sequence spans 372 residues: N-methyl-L-tryptophan oxidase (372 aa).

Residue D4 to H34 coordinates FAD. Residue C308 is modified to S-8alpha-FAD cysteine.

Belongs to the MSOX/MTOX family. MTOX subfamily. In terms of assembly, monomer. FAD is required as a cofactor.

It carries out the reaction N(alpha)-methyl-L-tryptophan + O2 + H2O = L-tryptophan + formaldehyde + H2O2. Catalyzes the oxidative demethylation of N-methyl-L-tryptophan. The sequence is that of N-methyl-L-tryptophan oxidase from Escherichia coli O6:H1 (strain CFT073 / ATCC 700928 / UPEC).